A 212-amino-acid polypeptide reads, in one-letter code: Adenylate kinase (212 aa).

ATP is bound at residue 10-15 (GSGKGT). The interval 30–59 (STGDLMRKEINDETPLGIECARYMNEGRLV) is NMP. AMP is bound by residues Thr-31, Arg-36, 57–59 (RLV), and Gln-90. An LID region spans residues 124-161 (GRLICPKCKVSYHIISRKPKLEGICDNDGTELVRRPDD). ATP is bound at residue Arg-125. Zn(2+) contacts are provided by Cys-128 and Cys-131. Residue 134-135 (SY) participates in ATP binding. Positions 148 and 151 each coordinate Zn(2+). Positions 158 and 169 each coordinate AMP. Asn-198 serves as a coordination point for ATP.

It belongs to the adenylate kinase family. As to quaternary structure, monomer.

It localises to the cytoplasm. The catalysed reaction is AMP + ATP = 2 ADP. It functions in the pathway purine metabolism; AMP biosynthesis via salvage pathway; AMP from ADP: step 1/1. Its function is as follows. Catalyzes the reversible transfer of the terminal phosphate group between ATP and AMP. Plays an important role in cellular energy homeostasis and in adenine nucleotide metabolism. The protein is Adenylate kinase of Mesoplasma florum (strain ATCC 33453 / NBRC 100688 / NCTC 11704 / L1) (Acholeplasma florum).